A 358-amino-acid chain; its full sequence is Ribosomal RNA large subunit methyltransferase M (358 aa).

Residues Ser183, 216 to 219 (APGG), Asp235, Asp255, and Asp271 contribute to the S-adenosyl-L-methionine site. The active-site Proton acceptor is Lys300.

The protein belongs to the class I-like SAM-binding methyltransferase superfamily. RNA methyltransferase RlmE family. RlmM subfamily. As to quaternary structure, monomer.

It localises to the cytoplasm. It carries out the reaction cytidine(2498) in 23S rRNA + S-adenosyl-L-methionine = 2'-O-methylcytidine(2498) in 23S rRNA + S-adenosyl-L-homocysteine + H(+). Its function is as follows. Catalyzes the 2'-O-methylation at nucleotide C2498 in 23S rRNA. The polypeptide is Ribosomal RNA large subunit methyltransferase M (Pseudomonas fluorescens (strain SBW25)).